Reading from the N-terminus, the 37-residue chain is Cytochrome b6-f complex subunit 5 (37 aa).

A helical membrane pass occupies residues 5–25 (FLFGIVLGLIPITLTGLFVTA).

This sequence belongs to the PetG family. The 4 large subunits of the cytochrome b6-f complex are cytochrome b6, subunit IV (17 kDa polypeptide, PetD), cytochrome f and the Rieske protein, while the 4 small subunits are PetG, PetL, PetM and PetN. The complex functions as a dimer.

It localises to the plastid. It is found in the chloroplast thylakoid membrane. Component of the cytochrome b6-f complex, which mediates electron transfer between photosystem II (PSII) and photosystem I (PSI), cyclic electron flow around PSI, and state transitions. PetG is required for either the stability or assembly of the cytochrome b6-f complex. The sequence is that of Cytochrome b6-f complex subunit 5 from Phalaenopsis aphrodite subsp. formosana (Moth orchid).